A 449-amino-acid polypeptide reads, in one-letter code: Gallate transporter (449 aa).

The next 12 membrane-spanning stretches (helical) occupy residues 26–46, 62–82, 92–112, 123–143, 155–175, 183–203, 262–282, 298–318, 326–346, 349–369, 388–408, and 414–434; these read WLIL…VAVM, AAFG…ALTA, KKVL…CAFA, LLTG…LAEY, IMFT…AWLI, VLLA…WLLP, LALW…MGWL, TITG…GWIM, VIAI…ALSL, SLLV…QTAL, WMLG…GAVL, and LPLL…AILA.

Belongs to the major facilitator superfamily. Sugar transporter (TC 2.A.1.1) family.

The protein localises to the membrane. Transporter that specifically mediates the uptake of gallate. This chain is Gallate transporter (galT), found in Pseudomonas putida (Arthrobacter siderocapsulatus).